The sequence spans 559 residues: WD repeat-containing protein JIP5 (559 aa).

WD repeat units follow at residues 26–67 (QYSD…NYLQ), 77–116 (ADGK…WKTK), 117–156 (RHKG…VVKK), 162–201 (DNGG…ETNR), 207–247 (NGDD…ESDF), 265–306 (DQED…LEDQ), 313–347 (AKEE…DIKK), 354–394 (RNHS…SEEE), and 428–470 (DSDG…SDDE). 2 disordered regions span residues 386–500 (SRNE…LIGL) and 515–559 (EESE…FEGL). Acidic residues predominate over residues 391 to 417 (SEEEDDEESESFSDSDSDSDSDSDSDS). Over residues 418-428 (DSDRDRDRDSD) the composition is skewed to basic and acidic residues. Residues 482-494 (DMDDIDEGSDSSE) show a composition bias toward acidic residues. Residues 520 to 534 (EGEKLQKKRKNEPSK) show a composition bias toward basic and acidic residues. Positions 535-544 (KNTKNLKKVK) are enriched in basic residues.

The protein belongs to the WD repeat WDR55 family.

It is found in the nucleus. It localises to the nucleolus. The protein is WD repeat-containing protein JIP5 (JIP5) of Vanderwaltozyma polyspora (strain ATCC 22028 / DSM 70294 / BCRC 21397 / CBS 2163 / NBRC 10782 / NRRL Y-8283 / UCD 57-17) (Kluyveromyces polysporus).